The chain runs to 1404 residues: DNA-directed RNA polymerase subunit beta' (1404 aa).

The Zn(2+) site is built by C70, C72, C85, and C88. 3 residues coordinate Mg(2+): D460, D462, and D464. Positions 814, 889, 896, and 899 each coordinate Zn(2+).

This sequence belongs to the RNA polymerase beta' chain family. The RNAP catalytic core consists of 2 alpha, 1 beta, 1 beta' and 1 omega subunit. When a sigma factor is associated with the core the holoenzyme is formed, which can initiate transcription. The cofactor is Mg(2+). Zn(2+) is required as a cofactor.

The enzyme catalyses RNA(n) + a ribonucleoside 5'-triphosphate = RNA(n+1) + diphosphate. In terms of biological role, DNA-dependent RNA polymerase catalyzes the transcription of DNA into RNA using the four ribonucleoside triphosphates as substrates. The sequence is that of DNA-directed RNA polymerase subunit beta' from Xanthomonas axonopodis pv. citri (strain 306).